A 377-amino-acid chain; its full sequence is Adaptive-response sensory kinase SasA (377 aa).

A Histidine kinase domain is found at 154-373; sequence MLVHDLRSPL…SFHFTLPVYR (220 aa). His157 bears the Phosphohistidine; by autocatalysis mark.

As to quaternary structure, homooligomerizes. Interacts with KaiC. Participates in the KaiABC clock complex, whose core is composed of a KaiC homohexamer, 6 KaiB and up to 6 KaiA dimers. SasA and KaiB(fs) compete to bind to KaiC.

The enzyme catalyses ATP + protein L-histidine = ADP + protein N-phospho-L-histidine.. Functionally, member of the two-component regulatory system SasA/RpaA involved in genome-wide circadian gene expression. One of several clock output pathways. Participates in the Kai clock protein complex, the main circadian regulator in cyanobacteria, via its interaction with KaiC. KaiC enhances the autophosphorylation activity of SasA, which then transfers its phosphate group to RpaA to activate it. In addition to its output function, recruits fold-shifted KaiB (KaiB(fs)) to KaiC to cooperatively form the KaiB(6):KaiC(6) complex (independent of SasA kinase activity). Required for robustness of the circadian rhythm of gene expression and is involved in clock output, also required for adaptation to light/dark cycles. This Synechococcus sp. (strain JA-3-3Ab) (Cyanobacteria bacterium Yellowstone A-Prime) protein is Adaptive-response sensory kinase SasA.